A 205-amino-acid polypeptide reads, in one-letter code: Fibrillarin-like rRNA/tRNA 2'-O-methyltransferase (205 aa).

S-adenosyl-L-methionine is bound by residues 60–61 (ST), 76–77 (EF), 101–102 (DA), and 121–124 (DIAQ).

The protein belongs to the methyltransferase superfamily. Fibrillarin family. In terms of assembly, interacts with nop5. Component of box C/D small ribonucleoprotein (sRNP) particles that contain rpl7ae, FlpA and nop5, plus a guide RNA.

In terms of biological role, involved in pre-rRNA and tRNA processing. Utilizes the methyl donor S-adenosyl-L-methionine to catalyze the site-specific 2'-hydroxyl methylation of ribose moieties in rRNA and tRNA. Site specificity is provided by a guide RNA that base pairs with the substrate. Methylation occurs at a characteristic distance from the sequence involved in base pairing with the guide RNA. This chain is Fibrillarin-like rRNA/tRNA 2'-O-methyltransferase, found in Methanospirillum hungatei JF-1 (strain ATCC 27890 / DSM 864 / NBRC 100397 / JF-1).